A 93-amino-acid polypeptide reads, in one-letter code: Antitoxin RelF (93 aa).

Belongs to the phD/YefM antitoxin family. Interacts with toxin RelG, which neutralizes the toxin. Also interacts with toxins RelE and RelK in vitro, in M.smegmatis coexpression with non-cognate toxins increases the toxicity of RelE but not of RelK.

In terms of biological role, antitoxin component of a type II toxin-antitoxin (TA) system. Upon expression in M.smegmatis neutralizes the effect of toxin RelE2. Induces its own promoter, in combination with RelG represses its own promoter. Has been seen to bind DNA in complex with toxin RelG but not alone. This is Antitoxin RelF (relF) from Mycobacterium tuberculosis (strain ATCC 25618 / H37Rv).